A 235-amino-acid polypeptide reads, in one-letter code: Glycerol-3-phosphate acyltransferase (235 aa).

6 consecutive transmembrane segments (helical) span residues 4 to 24, 56 to 76, 90 to 110, 126 to 146, 152 to 172, and 191 to 211; these read LIVILAVSYLIGSIPTSIIAG, AVTLLDIVKGAVAAISVVVFF, VALRLIAGLAAVFGHVFTVFA, FGIAPVSTLIVLAVFLLTIFV, VASIIAAIAFPLVILVRKYLF, and IHDSLDFHLLIFGMIVAFAII.

It belongs to the PlsY family. In terms of assembly, probably interacts with PlsX.

It is found in the cell inner membrane. The catalysed reaction is an acyl phosphate + sn-glycerol 3-phosphate = a 1-acyl-sn-glycero-3-phosphate + phosphate. It functions in the pathway lipid metabolism; phospholipid metabolism. Its function is as follows. Catalyzes the transfer of an acyl group from acyl-phosphate (acyl-PO(4)) to glycerol-3-phosphate (G3P) to form lysophosphatidic acid (LPA). This enzyme utilizes acyl-phosphate as fatty acyl donor, but not acyl-CoA or acyl-ACP. In Prosthecochloris aestuarii (strain DSM 271 / SK 413), this protein is Glycerol-3-phosphate acyltransferase.